The following is a 500-amino-acid chain: L-aspartate semialdehyde sulfurtransferase (500 aa).

The active-site Cysteine persulfide intermediate is the C131. 2 consecutive CBS domains span residues 384–441 (MADF…IFDS) and 446–500 (MTKK…ARRY).

It belongs to the L-aspartate semialdehyde sulfurtransferase family. In terms of assembly, forms homodimers. May form a complex with MA_1822.

The catalysed reaction is L-aspartate 4-semialdehyde + reduced 2[4Fe-4S]-[ferredoxin] + hydrogen sulfide + 3 H(+) = oxidized 2[4Fe-4S]-[ferredoxin] + L-homocysteine + H2O. It functions in the pathway amino-acid biosynthesis. Functionally, required for O-acetylhomoserine sulfhydrylase (OAHS)-independent homocysteine (Hcy) biosynthesis. Together with MA_1822, catalyzes the condensation of sulfide with aspartate semialdehyde to generate homocysteine. Likely functions through persulfide intermediate. In Methanosarcina acetivorans (strain ATCC 35395 / DSM 2834 / JCM 12185 / C2A), this protein is L-aspartate semialdehyde sulfurtransferase.